Reading from the N-terminus, the 74-residue chain is Conotoxin ca17a (74 aa).

A signal peptide spans Met1–Ala20. Residues Gln21 to Arg40 constitute a propeptide that is removed on maturation. Pro51 is subject to 4-hydroxyproline.

Contains disulfide bonds. Expressed by the venom gland.

It is found in the secreted. In Conus caracteristicus (Characteristic cone), this protein is Conotoxin ca17a.